Consider the following 721-residue polypeptide: Polyphosphate kinase (721 aa).

Position 47 (asparagine 47) interacts with ATP. The Mg(2+) site is built by arginine 377 and arginine 407. Histidine 437 serves as the catalytic Phosphohistidine intermediate. Residues tyrosine 471, arginine 567, and histidine 595 each contribute to the ATP site.

The protein belongs to the polyphosphate kinase 1 (PPK1) family. Mg(2+) is required as a cofactor. An intermediate of this reaction is the autophosphorylated ppk in which a phosphate is covalently linked to a histidine residue through a N-P bond.

It carries out the reaction [phosphate](n) + ATP = [phosphate](n+1) + ADP. In terms of biological role, catalyzes the reversible transfer of the terminal phosphate of ATP to form a long-chain polyphosphate (polyP). This is Polyphosphate kinase from Exiguobacterium sp. (strain ATCC BAA-1283 / AT1b).